A 625-amino-acid polypeptide reads, in one-letter code: DELLA protein SLR1 (625 aa).

Residues 1–34 (MKREYQEAGGSSGGGSSADMGSCKDKVMAGAAGE) are disordered. The short motif at 39–43 (DELLA) is the DELLA motif element. The segment at 167 to 209 (TADPSAADSARDTKRMRTGGGSTSSSSSSSSSLGGGASRGSVV) is disordered. A compositionally biased stretch (low complexity) spans 189 to 198 (TSSSSSSSSS). One can recognise a GRAS domain in the interval 232-621 (VDTQEAGIRL…RPLIATSAWR (390 aa)). The leucine repeat I (LRI) stretch occupies residues 239 to 294 (IRLVHALLACAEAVQQENFAAAEALVKQIPTLAASQGGAMRKVAAYFGEALARRVY). The required for possible homodimerization stretch occupies residues 241–278 (LVHALLACAEAVQQENFAAAEALVKQIPTLAASQGGAM). A LxCxE motif motif is present at residues 246–250 (LACAE). The interval 313–378 (HAHFYESCPY…GGPPSFRLTG (66 aa)) is VHIID. The short motif at 344–348 (VHVVD) is the VHIID element. Residues 392–431 (QVGWKLAQFAHTIRVDFQYRGLVAATLADLEPFMLQPEGE) form a leucine repeat II (LRII) region. Residues 441–542 (IAVNSVFELH…EVYLGRQICN (102 aa)) form a PFYRE region. The LXXLL motif signature appears at 449-453 (LHRLL). The SAW stretch occupies residues 545–621 (ACEGAERTER…RPLIATSAWR (77 aa)).

This sequence belongs to the GRAS family. DELLA subfamily. In terms of assembly, may be a homodimer. Interacts directly with the GID2 component of the SCF(GID2) complex. Interacts with GID1 in a GA-dependent manner, probably leading to its interaction with GID2 and its subsequent degradation. Interacts with D14 and GID1 in an strigolactone-dependent manner. Interacts with HD16/EL1. In terms of processing, phosphorylated on Ser/Thr residues in the N-terminal part. Both phosphorylated and unphosphorylated forms are degraded upon GA treatment, suggesting that phosphorylation does not trigger ubiquitination. Phosphorylated by HD16/EL1. Phosphorylation enhances its stability. Post-translationally, ubiquitinated. Upon GA application it is ubiquitinated by the SCF(GID2) complex, leading to its subsequent degradation. In terms of tissue distribution, expressed in nodes, internodes, leaf sheats of young seedlings and ears of adult plants. Weakly expressed in leaf blade and root.

Its subcellular location is the nucleus. Its function is as follows. Probable transcriptional regulator that acts as a repressor of the gibberellin (GA) signaling pathway. Probably acts by participating in large multiprotein complexes that repress transcription of GA-inducible genes. Upon GA application, it is degraded by the proteasome, allowing the GA signaling pathway. In contrast, its overexpression prevents the GA signaling pathway and induces a dwarf phenotype. The sequence is that of DELLA protein SLR1 from Oryza sativa subsp. japonica (Rice).